The following is a 218-amino-acid chain: External core antigen (218 aa).

The first 19 residues, 1-19 (MYLFHLCLVFACVPCPTFQ), serve as a signal peptide directing secretion. An HBEAG region spans residues 26–28 (GWL). Basic residues predominate over residues 180-211 (RRRGGARASRSPRRRTPSPRRRRSQSPRRRRS). The disordered stretch occupies residues 180–218 (RRRGGARASRSPRRRTPSPRRRRSQSPRRRRSQSPSANC). The 1; half-length repeat unit spans residues 190–196 (SPRRRTP). The 3 X 8 AA repeats of S-P-R-R-R-R-S-Q stretch occupies residues 190 to 212 (SPRRRTPSPRRRRSQSPRRRRSQ). The propeptide occupies 190–218 (SPRRRTPSPRRRRSQSPRRRRSQSPSANC). A run of 2 repeats spans residues 197-204 (SPRRRRSQ) and 205-212 (SPRRRRSQ).

The protein belongs to the orthohepadnavirus precore antigen family. In terms of assembly, homodimerizes. Phosphorylated. Post-translationally, cleaved by host furin.

It is found in the secreted. It localises to the host nucleus. In terms of biological role, may regulate immune response to the intracellular capsid in acting as a T-cell tolerogen, by having an immunoregulatory effect which prevents destruction of infected cells by cytotoxic T-cells. This immune regulation may predispose to chronicity during perinatal infections and prevent severe liver injury during adult infections. This Marmota monax (Woodchuck) protein is External core antigen.